A 178-amino-acid polypeptide reads, in one-letter code: NAD(P)H-quinone oxidoreductase subunit J (178 aa).

This sequence belongs to the complex I 30 kDa subunit family. In terms of assembly, NDH-1 can be composed of about 15 different subunits; different subcomplexes with different compositions have been identified which probably have different functions.

The protein localises to the cellular thylakoid membrane. It catalyses the reaction a plastoquinone + NADH + (n+1) H(+)(in) = a plastoquinol + NAD(+) + n H(+)(out). The enzyme catalyses a plastoquinone + NADPH + (n+1) H(+)(in) = a plastoquinol + NADP(+) + n H(+)(out). Functionally, NDH-1 shuttles electrons from an unknown electron donor, via FMN and iron-sulfur (Fe-S) centers, to quinones in the respiratory and/or the photosynthetic chain. The immediate electron acceptor for the enzyme in this species is believed to be plastoquinone. Couples the redox reaction to proton translocation, and thus conserves the redox energy in a proton gradient. Cyanobacterial NDH-1 also plays a role in inorganic carbon-concentration. The polypeptide is NAD(P)H-quinone oxidoreductase subunit J (Crocosphaera subtropica (strain ATCC 51142 / BH68) (Cyanothece sp. (strain ATCC 51142))).